The following is a 356-amino-acid chain: MPLTKYKAAAVTSEPAWFNLEAGVQKTIDFINEAGQAGCKLIAFPEVWIPGYPYWMWKINYQQSLPMLKKYRENSMAVDSDEFRRIRRAARDNQIHVSLGFSEIDHATLYLAQALISPTGEVLNHRRKIKPTHVEKLVYGDGAGDTFTSVVPTELGRLGQLNCWENMNPFLKALNVSAGEQIHIAAWPVYPGKETLKYPDPATNVADPASDLVTPAYAIETGTWTLAPFQRLSAEGLKMNTPEGVEPETDPTTYNGHARIYRPDGSLVVKPDKDFDGLLFVDIDLNECHLTKALADFSGHYMRPDLIRLLVDTRRKELVTEAEGNDGVKAYSTRERLGLNLPLDGSKEDEKVPVAL.

A CN hydrolase domain is found at 6–285 (YKAAAVTSEP…DGLLFVDIDL (280 aa)). Residue glutamate 46 is the Proton acceptor of the active site. Lysine 128 is an active-site residue. Catalysis depends on cysteine 163, which acts as the Nucleophile.

This sequence belongs to the carbon-nitrogen hydrolase superfamily. Nitrilase family. In terms of assembly, oligomer of dimers, forming left-handed helical fibers.

It catalyses the reaction formamide = hydrogen cyanide + H2O. Its function is as follows. Catalyzes the hydration of cyanide to formamide. Degradation of cyanide may be important for plant pathogenic fungi in infection of cyanogenic plants. In Leptosphaeria maculans (Blackleg fungus), this protein is Cyanide hydratase.